The sequence spans 75 residues: MKLLLFTALVLVVISLIEVEAENERACIPLEKECTKTPGNCCSGLKCDCYRRFEQGVAKGIQCWCIEKDVTYKGI.

Residues M1–A21 form the signal peptide. Residues E22–R25 constitute a propeptide that is removed on maturation.

The protein belongs to the neurotoxin 19 (CSTX) family. 06 (U6-Lctx) subfamily. In terms of processing, contains 4 disulfide bonds. Expressed by the venom gland.

It is found in the secreted. The polypeptide is U6-lycotoxin-Ls1b (Lycosa singoriensis (Wolf spider)).